Reading from the N-terminus, the 467-residue chain is 55 kDa erythrocyte membrane protein (467 aa).

In terms of domain architecture, PDZ spans 73 to 154; the sequence is EVAFEKNQSE…VVTMKIIPRP (82 aa). Residues 160–230 form the SH3 domain; sequence PCEMYMRGQF…PSPELQEWRA (71 aa). The region spanning 283–452 is the Guanylate kinase-like domain; it reads RKTLVLIGAP…SVKIVEEALE (170 aa).

It belongs to the MAGUK family. Post-translationally, extensively palmitoylated.

The protein resides in the membrane. Its function is as follows. May play a role in the regulation of neutrophil polarization. In Takifugu rubripes (Japanese pufferfish), this protein is 55 kDa erythrocyte membrane protein (mpp1).